The sequence spans 525 residues: Cytochrome P450 monooxygenase ltmJ (525 aa).

The helical transmembrane segment at 21–43 threads the bilayer; it reads LTWWQTIVSFIIFCIMCSWLPGN. An N-linked (GlcNAc...) asparagine glycan is attached at Asn136. Cys465 is a heme binding site.

The protein belongs to the cytochrome P450 family. Requires heme as cofactor.

It localises to the membrane. It functions in the pathway secondary metabolite biosynthesis. In terms of biological role, cytochrome P450 monooxygenase; part of the gene clusters that mediates the biosynthesis of lolitrems, indole-diterpene mycotoxins that are potent tremorgens in mammals, and are synthesized by clavicipitaceous fungal endophytes in association with their grass hosts. The geranylgeranyl diphosphate (GGPP) synthase ltmG is proposed to catalyze the first step in lolitrem biosynthesis. LtmG catalyzes a series of iterative condensations of isopentenyl diphosphate (IPP) with dimethylallyl diphosphate (DMAPP), geranyl diphosphate (GPP), and farnesyl diphosphate (FPP), to form GGPP. GGPP then condenses with indole-3-glycerol phosphate to form 3-geranylgeranylindole, an acyclic intermediate, to be incorporated into paxilline. Either ltmG or ltmC could be responsible for this step, as both are putative prenyl transferases. The FAD-dependent monooxygenase ltmM then catalyzes the epoxidation of the two terminal alkenes of the geranylgeranyl moiety, which is subsequently cyclized by ltmB, to paspaline. The cytochrome P450 monooxygenases ltmQ and ltmP can sequentially oxidize paspaline to terpendole E and terpendole F. Alternatively, ltmP converts paspaline to an intermediate which is oxidized by ltmQ to terpendole F. LtmF, ltmK, ltmE and ltmJ appear to be unique to the epichloe endophytes. The prenyltransferase ltmF is involved in the 27-hydroxyl-O-prenylation. The cytochrome P450 monooxygenase ltmK is required for the oxidative acetal ring formation. The multi-functional prenyltransferase ltmE is required for C20- and C21-prenylations of the indole ring of paspalanes and acts together with the cytochrome P450 monooxygenase ltmJ to yield lolitremanes by multiple oxidations and ring closures. The stereoisomer pairs of lolitriol and lolitrem N or lolitrem B and lolitrem F may be attributed to variations in the way in which ring closure can occur under the action of ltmJ. While the major product of this pathway is lolitrem B, the prenyl transferases and cytochrome P450 monooxygenases identified in this pathway have a remarkable versatility in their regio- and stereo-specificities to generate a diverse range of metabolites that are products of a metabolic grid rather than a linear pathway. The polypeptide is Cytochrome P450 monooxygenase ltmJ (ltmJ) (Epichloe festucae var. lolii (Neotyphodium lolii)).